The chain runs to 36 residues: Glucagon (36 aa).

It belongs to the glucagon family. In terms of tissue distribution, produced by the X-cells of the islets of pancreas.

It localises to the secreted. Its function is as follows. Promotes hydrolysis of glycogen and lipids, and raises the blood sugar level. In Hydrolagus colliei (Spotted ratfish), this protein is Glucagon (gcg).